The chain runs to 275 residues: 2,3,4,5-tetrahydropyridine-2,6-dicarboxylate N-succinyltransferase (275 aa).

Positions 105 and 142 each coordinate substrate.

The protein belongs to the transferase hexapeptide repeat family. As to quaternary structure, homotrimer.

The protein resides in the cytoplasm. The catalysed reaction is (S)-2,3,4,5-tetrahydrodipicolinate + succinyl-CoA + H2O = (S)-2-succinylamino-6-oxoheptanedioate + CoA. The protein operates within amino-acid biosynthesis; L-lysine biosynthesis via DAP pathway; LL-2,6-diaminopimelate from (S)-tetrahydrodipicolinate (succinylase route): step 1/3. The sequence is that of 2,3,4,5-tetrahydropyridine-2,6-dicarboxylate N-succinyltransferase from Histophilus somni (strain 129Pt) (Haemophilus somnus).